A 314-amino-acid polypeptide reads, in one-letter code: Olfactory receptor 5P51 (314 aa).

Residues 1–28 (MAFLEDGNHTAVTEFVLFGLTDDPVLRV) are Extracellular-facing. A glycan (N-linked (GlcNAc...) asparagine) is linked at Asn-8. A helical transmembrane segment spans residues 29 to 49 (ILFIIFLCIYLVNVSGNLSTI). At 50 to 57 (LLIRVSSQ) the chain is on the cytoplasmic side. A helical membrane pass occupies residues 58–78 (LHHPMYFFLSHLASVDVGYSS). Topologically, residues 79–102 (TVTPKMLANFLLERSTISYLGCTI) are extracellular. Cys-100 and Cys-192 are disulfide-bonded. The chain crosses the membrane as a helical span at residues 103–123 (QLFSGAFVGTLECFLLATMAY). Over 124–136 (DRFIAICNPLLYS) the chain is Cytoplasmic. The helical transmembrane segment at 137–157 (TKMSTQVCIQLLVGSYIGGFL) threads the bilayer. Residues 158-199 (NASSFLLSFFPLLFCGPNRVNHYSCDLTPLIELSCSGSNVPI) are Extracellular-facing. The chain crosses the membrane as a helical span at residues 200 to 220 (VPASFCSAFVIIVTVSVIAIS). Residues 221 to 240 (YTYILITILKMRSTEGRQKA) lie on the Cytoplasmic side of the membrane. Residues 241-261 (FSTCTSHLTAVTLYYGTVTFI) form a helical membrane-spanning segment. At 262-274 (YVMPKSSYSTDQN) the chain is on the extracellular side. Residues 275–295 (KVVSVFYTVVIPMLNPIIYSL) form a helical membrane-spanning segment. Residues 296–314 (RNNEIKGALKRQLARKIFS) lie on the Cytoplasmic side of the membrane.

It belongs to the G-protein coupled receptor 1 family.

It localises to the cell membrane. Its function is as follows. Potential odorant receptor. This Mus musculus (Mouse) protein is Olfactory receptor 5P51.